The following is a 594-amino-acid chain: Putative lipase ATG15-1 (594 aa).

Over 1 to 12 the chain is Cytoplasmic; sequence MRRRPLCTSASR. The chain crosses the membrane as a helical; Signal-anchor for type II membrane protein span at residues 13–33; sequence VTASLLLSFLAVSSAAELPIL. Topologically, residues 34–594 are lumenal; the sequence is PAPPISPQPH…ANHFVYVLHA (561 aa). N-linked (GlcNAc...) asparagine glycosylation is found at N144, N179, N201, N259, and N283. S299 (charge relay system) is an active-site residue. Residues N432 and N445 are each glycosylated (N-linked (GlcNAc...) asparagine). The segment covering 447–469 has biased composition (low complexity); the sequence is TETTTTSTSKPTSTSKSSKSNTR. Disordered stretches follow at residues 447 to 473 and 489 to 509; these read TETT…TRTE and TGTQ…TSTC. N576 and N582 each carry an N-linked (GlcNAc...) asparagine glycan.

This sequence belongs to the AB hydrolase superfamily. Lipase family. Binds to both phosphatidylinositol (PI) and phosphatidylinositol 3,5-bisphosphate (PIP2).

The protein localises to the endosome. It is found in the multivesicular body membrane. It localises to the prevacuolar compartment membrane. The catalysed reaction is a triacylglycerol + H2O = a diacylglycerol + a fatty acid + H(+). Lipase which is essential for lysis of subvacuolar cytoplasm to vacuole targeted bodies and intravacuolar autophagic bodies. Involved in the lysis of intravacuolar multivesicular body (MVB) vesicles. The intravacuolar membrane disintegration by ATG15 is critical to life span extension. This chain is Putative lipase ATG15-1 (ATG15-1), found in Phaeosphaeria nodorum (strain SN15 / ATCC MYA-4574 / FGSC 10173) (Glume blotch fungus).